A 633-amino-acid chain; its full sequence is Proline-rich protein LAS17 (633 aa).

Residues 16–127 enclose the WH1 domain; the sequence is LPKASNKIID…KRVQKRERYA (112 aa). Disordered regions lie at residues 145–545 and 563–606; these read REEQ…TTGD and ALRK…PASL. The span at 192–215 shows a compositional bias: low complexity; sequence AETFDSDQTSSFSDINSTTASAPT. 2 stretches are compositionally biased toward pro residues: residues 216–225 and 238–256; these read TPAPALPPAS and SLPP…PQHN. Low complexity-rich tracts occupy residues 257 to 269 and 307 to 322; these read SPPQ…QPQS and PQQN…RNNR. Thr-334 is modified (phosphothreonine). Phosphoserine is present on Ser-337. Positions 342 to 357 are enriched in pro residues; sequence PAPPPPPRRGPAPPPP. 3 stretches are compositionally biased toward polar residues: residues 363-376, 399-414, and 454-465; these read TSNT…NSLL, NVTM…NSNR, and PQNTQAPSQATN. The span at 479-488 shows a compositional bias: low complexity; that stretch reads QSQIPQSAPS. Residues 547 to 567 enclose the WH2 domain; sequence GRDALLASIRGAGGIGALRKV. At Ser-588 the chain carries Phosphoserine.

As to quaternary structure, interacts with KRE6, LSB3, LSB5 and YSC84.

The chain is Proline-rich protein LAS17 (LAS17) from Saccharomyces cerevisiae (strain ATCC 204508 / S288c) (Baker's yeast).